A 288-amino-acid polypeptide reads, in one-letter code: Pyridoxal kinase PdxY (288 aa).

Substrate-binding positions include serine 12 and 47–48 (TQ). Residues aspartate 114, glutamate 151, lysine 184, and 211–214 (RPLL) contribute to the ATP site. Aspartate 225 contributes to the substrate binding site.

Belongs to the pyridoxine kinase family. PdxY subfamily. As to quaternary structure, homodimer. Mg(2+) is required as a cofactor.

The enzyme catalyses pyridoxal + ATP = pyridoxal 5'-phosphate + ADP + H(+). It functions in the pathway cofactor metabolism; pyridoxal 5'-phosphate salvage; pyridoxal 5'-phosphate from pyridoxal: step 1/1. In terms of biological role, pyridoxal kinase involved in the salvage pathway of pyridoxal 5'-phosphate (PLP). Catalyzes the phosphorylation of pyridoxal to PLP. The chain is Pyridoxal kinase PdxY from Pseudomonas syringae pv. tomato (strain ATCC BAA-871 / DC3000).